The following is a 151-amino-acid chain: Prefoldin subunit alpha (151 aa).

The segment at 120–151 (TVEEETASLEEKAQQAQQQQMQQLQQMQQEDE) is disordered. Residues 133–151 (QQAQQQQMQQLQQMQQEDE) are compositionally biased toward low complexity.

It belongs to the prefoldin subunit alpha family. Heterohexamer of two alpha and four beta subunits.

The protein resides in the cytoplasm. In terms of biological role, molecular chaperone capable of stabilizing a range of proteins. Seems to fulfill an ATP-independent, HSP70-like function in archaeal de novo protein folding. In Natronomonas pharaonis (strain ATCC 35678 / DSM 2160 / CIP 103997 / JCM 8858 / NBRC 14720 / NCIMB 2260 / Gabara) (Halobacterium pharaonis), this protein is Prefoldin subunit alpha.